A 251-amino-acid chain; its full sequence is Imidazole glycerol phosphate synthase subunit HisF (251 aa).

Catalysis depends on residues D11 and D130.

Belongs to the HisA/HisF family. As to quaternary structure, heterodimer of HisH and HisF.

It is found in the cytoplasm. The catalysed reaction is 5-[(5-phospho-1-deoxy-D-ribulos-1-ylimino)methylamino]-1-(5-phospho-beta-D-ribosyl)imidazole-4-carboxamide + L-glutamine = D-erythro-1-(imidazol-4-yl)glycerol 3-phosphate + 5-amino-1-(5-phospho-beta-D-ribosyl)imidazole-4-carboxamide + L-glutamate + H(+). Its pathway is amino-acid biosynthesis; L-histidine biosynthesis; L-histidine from 5-phospho-alpha-D-ribose 1-diphosphate: step 5/9. In terms of biological role, IGPS catalyzes the conversion of PRFAR and glutamine to IGP, AICAR and glutamate. The HisF subunit catalyzes the cyclization activity that produces IGP and AICAR from PRFAR using the ammonia provided by the HisH subunit. This chain is Imidazole glycerol phosphate synthase subunit HisF, found in Chlorobium chlorochromatii (strain CaD3).